The chain runs to 126 residues: Gas vesicle protein J (126 aa).

Belongs to the gas vesicle GvpA family. As to quaternary structure, interacts with GvpA.

It is found in the gas vesicle. In terms of biological role, a minor component of the gas vesicle, might be involved in nucleating gas vesicle formation. Gas vesicles (GV) are hollow, gas filled proteinaceous nanostructures. During planktonic growth they allow positioning of the organism at a favorable depth for light or nutrient acquisition. The protein is Gas vesicle protein J of Pseudanabaena galeata (strain PCC 6901).